Consider the following 220-residue polypeptide: Germin-like protein subfamily 2 member 4 (220 aa).

The signal sequence occupies residues 1 to 21 (MDSRCFGFFFTLLSLNVIVLA). Cysteines 31 and 46 form a disulfide. N-linked (GlcNAc...) asparagine glycosylation is found at N51 and N69. The region spanning 58–209 (FFAGIGKPAV…TFQIGTKEIE (152 aa)) is the Cupin type-1 domain. H108, H110, E115, and H154 together coordinate Mn(2+).

This sequence belongs to the germin family. In terms of assembly, oligomer (believed to be a pentamer but probably hexamer).

Its subcellular location is the secreted. It is found in the extracellular space. It localises to the apoplast. In terms of biological role, may play a role in plant defense. Probably has no oxalate oxidase activity even if the active site is conserved. The polypeptide is Germin-like protein subfamily 2 member 4 (GLP10) (Arabidopsis thaliana (Mouse-ear cress)).